Consider the following 336-residue polypeptide: tRNA N6-adenosine threonylcarbamoyltransferase (336 aa).

Fe cation contacts are provided by His-112 and His-116. Residues 136–140 (LVSGG), Asp-169, Gly-182, and Asn-276 each bind substrate. Asp-304 contributes to the Fe cation binding site.

Belongs to the KAE1 / TsaD family. Requires Fe(2+) as cofactor.

The protein resides in the cytoplasm. It catalyses the reaction L-threonylcarbamoyladenylate + adenosine(37) in tRNA = N(6)-L-threonylcarbamoyladenosine(37) in tRNA + AMP + H(+). Required for the formation of a threonylcarbamoyl group on adenosine at position 37 (t(6)A37) in tRNAs that read codons beginning with adenine. Is involved in the transfer of the threonylcarbamoyl moiety of threonylcarbamoyl-AMP (TC-AMP) to the N6 group of A37, together with TsaE and TsaB. TsaD likely plays a direct catalytic role in this reaction. This Francisella tularensis subsp. holarctica (strain FTNF002-00 / FTA) protein is tRNA N6-adenosine threonylcarbamoyltransferase.